A 217-amino-acid chain; its full sequence is Protein GrpE (217 aa).

Belongs to the GrpE family. In terms of assembly, homodimer.

The protein localises to the cytoplasm. Functionally, participates actively in the response to hyperosmotic and heat shock by preventing the aggregation of stress-denatured proteins, in association with DnaK and GrpE. It is the nucleotide exchange factor for DnaK and may function as a thermosensor. Unfolded proteins bind initially to DnaJ; upon interaction with the DnaJ-bound protein, DnaK hydrolyzes its bound ATP, resulting in the formation of a stable complex. GrpE releases ADP from DnaK; ATP binding to DnaK triggers the release of the substrate protein, thus completing the reaction cycle. Several rounds of ATP-dependent interactions between DnaJ, DnaK and GrpE are required for fully efficient folding. The chain is Protein GrpE from Mycoplasma pneumoniae (strain ATCC 29342 / M129 / Subtype 1) (Mycoplasmoides pneumoniae).